The primary structure comprises 398 residues: Stearoyl-[acyl-carrier-protein] 9-desaturase, chloroplastic (398 aa).

The transit peptide at methionine 1–methionine 34 directs the protein to the chloroplast. Positions isoleucine 46–serine 66 are disordered. Fe cation is bound by residues glutamate 140, glutamate 178, histidine 181, glutamate 231, glutamate 264, and histidine 267.

This sequence belongs to the fatty acid desaturase type 2 family. As to quaternary structure, homodimer. Requires Fe(2+) as cofactor.

It is found in the plastid. Its subcellular location is the chloroplast. The catalysed reaction is octadecanoyl-[ACP] + 2 reduced [2Fe-2S]-[ferredoxin] + O2 + 2 H(+) = (9Z)-octadecenoyl-[ACP] + 2 oxidized [2Fe-2S]-[ferredoxin] + 2 H2O. It functions in the pathway lipid metabolism; fatty acid metabolism. Functionally, converts stearoyl-ACP to oleoyl-ACP by introduction of a cis double bond between carbons 9 and 10 of the acyl chain. This Simmondsia chinensis (Jojoba) protein is Stearoyl-[acyl-carrier-protein] 9-desaturase, chloroplastic.